The primary structure comprises 130 residues: MAKLSTDELLDAFKEMTLLELSDFVKKFEETFEVTAAAPVAVAAAGAAPAGAAVEAAEEQSEFDVILEAAGDKKIGVIKVVREIVSGLGLKEAKDLVDGAPKPLLEKVAKEAADEAKAKLEAAGATVTVK.

This sequence belongs to the bacterial ribosomal protein bL12 family. As to quaternary structure, homodimer. Part of the ribosomal stalk of the 50S ribosomal subunit. Forms a multimeric L10(L12)X complex, where L10 forms an elongated spine to which 2 to 4 L12 dimers bind in a sequential fashion. Binds GTP-bound translation factors.

Its function is as follows. Forms part of the ribosomal stalk which helps the ribosome interact with GTP-bound translation factors. Is thus essential for accurate translation. The sequence is that of Large ribosomal subunit protein bL12 from Mycobacterium bovis (strain ATCC BAA-935 / AF2122/97).